A 252-amino-acid chain; its full sequence is Major prion protein (252 aa).

Residues 1-28 form the signal peptide; the sequence is MAHLGYWMLLLFVATWSDVGLCKKRPKP. An interaction with GRB2, ERI3 and SYN1 region spans residues 23–229; it reads KKRPKPGGGW…ESQAAYQRAA (207 aa). The disordered stretch occupies residues 26–109; that stretch reads PKPGGGWNTG…KPSKPKTSMK (84 aa). 5 tandem repeats follow at residues 51–59, 60–67, 68–75, 76–83, and 84–92. Residues 51–92 are 5 X 8 AA tandem repeats of P-H-G-G-G-W-G-Q; the sequence is PPQGGGWGQPHGGGWGQPHGGGWGQPHGGGWGQPHGGGWGQG. Residues 53 to 93 are compositionally biased toward gly residues; sequence QGGGWGQPHGGGWGQPHGGGWGQPHGGGWGQPHGGGWGQGG. Positions 61, 62, 63, 69, 70, 71, 77, 78, 79, 85, 86, and 87 each coordinate Cu(2+). Cysteines 178 and 213 form a disulfide. N-linked (GlcNAc...) asparagine glycans are attached at residues Asn180 and Asn196. Ala229 carries GPI-anchor amidated alanine lipidation. The propeptide at 230–252 is removed in mature form; sequence GVLLFSSPPVILLISFLIFLIVG.

The protein belongs to the prion family. Monomer and homodimer. Has a tendency to aggregate into amyloid fibrils containing a cross-beta spine, formed by a steric zipper of superposed beta-strands. Soluble oligomers may represent an intermediate stage on the path to fibril formation. Copper binding may promote oligomerization. Interacts with GRB2, APP, ERI3/PRNPIP and SYN1. Mislocalized cytosolically exposed PrP interacts with MGRN1; this interaction alters MGRN1 subcellular location and causes lysosomal enlargement. Interacts with KIAA1191.

The protein localises to the cell membrane. It localises to the golgi apparatus. In terms of biological role, its primary physiological function is unclear. Has cytoprotective activity against internal or environmental stresses. May play a role in neuronal development and synaptic plasticity. May be required for neuronal myelin sheath maintenance. May play a role in iron uptake and iron homeostasis. Soluble oligomers are toxic to cultured neuroblastoma cells and induce apoptosis (in vitro). Association with GPC1 (via its heparan sulfate chains) targets PRNP to lipid rafts. Also provides Cu(2+) or Zn(2+) for the ascorbate-mediated GPC1 deaminase degradation of its heparan sulfate side chains. The sequence is that of Major prion protein (PRNP) from Oryctolagus cuniculus (Rabbit).